The sequence spans 215 residues: Chaperone protein TorD (215 aa).

The protein belongs to the TorD/DmsD family. TorD subfamily.

It localises to the cytoplasm. In terms of biological role, involved in the biogenesis of TorA. Acts on TorA before the insertion of the molybdenum cofactor and, as a result, probably favors a conformation of the apoenzyme that is competent for acquiring the cofactor. This chain is Chaperone protein TorD, found in Aliivibrio fischeri (strain ATCC 700601 / ES114) (Vibrio fischeri).